A 556-amino-acid chain; its full sequence is Dihydroxy-acid dehydratase (556 aa).

Mg(2+) is bound at residue aspartate 81. Cysteine 122 serves as a coordination point for [2Fe-2S] cluster. Residues aspartate 123 and lysine 124 each contribute to the Mg(2+) site. Residue lysine 124 is modified to N6-carboxylysine. Cysteine 196 is a binding site for [2Fe-2S] cluster. Glutamate 444 is a Mg(2+) binding site. Catalysis depends on serine 470, which acts as the Proton acceptor.

It belongs to the IlvD/Edd family. As to quaternary structure, homodimer. [2Fe-2S] cluster is required as a cofactor. Mg(2+) serves as cofactor.

The enzyme catalyses (2R)-2,3-dihydroxy-3-methylbutanoate = 3-methyl-2-oxobutanoate + H2O. It catalyses the reaction (2R,3R)-2,3-dihydroxy-3-methylpentanoate = (S)-3-methyl-2-oxopentanoate + H2O. It participates in amino-acid biosynthesis; L-isoleucine biosynthesis; L-isoleucine from 2-oxobutanoate: step 3/4. It functions in the pathway amino-acid biosynthesis; L-valine biosynthesis; L-valine from pyruvate: step 3/4. Functionally, functions in the biosynthesis of branched-chain amino acids. Catalyzes the dehydration of (2R,3R)-2,3-dihydroxy-3-methylpentanoate (2,3-dihydroxy-3-methylvalerate) into 2-oxo-3-methylpentanoate (2-oxo-3-methylvalerate) and of (2R)-2,3-dihydroxy-3-methylbutanoate (2,3-dihydroxyisovalerate) into 2-oxo-3-methylbutanoate (2-oxoisovalerate), the penultimate precursor to L-isoleucine and L-valine, respectively. The polypeptide is Dihydroxy-acid dehydratase (Syntrophotalea carbinolica (strain DSM 2380 / NBRC 103641 / GraBd1) (Pelobacter carbinolicus)).